The sequence spans 234 residues: Triosephosphate isomerase (234 aa).

Substrate is bound at residue 8-10 (NFK). Residue His90 is the Electrophile of the active site. Glu159 functions as the Proton acceptor in the catalytic mechanism. Substrate-binding positions include Gly165, Ser197, and 218–219 (GS).

In terms of assembly, homodimer.

It localises to the cytoplasm. It carries out the reaction D-glyceraldehyde 3-phosphate = dihydroxyacetone phosphate. It functions in the pathway carbohydrate biosynthesis; gluconeogenesis. The protein operates within carbohydrate degradation; glycolysis; D-glyceraldehyde 3-phosphate from glycerone phosphate: step 1/1. Its function is as follows. Involved in the gluconeogenesis. Catalyzes stereospecifically the conversion of dihydroxyacetone phosphate (DHAP) to D-glyceraldehyde-3-phosphate (G3P). This is Triosephosphate isomerase from Helicobacter pylori (strain ATCC 700392 / 26695) (Campylobacter pylori).